A 208-amino-acid polypeptide reads, in one-letter code: GTP cyclohydrolase 1 (208 aa).

Residues cysteine 89, histidine 92, and cysteine 163 each contribute to the Zn(2+) site.

This sequence belongs to the GTP cyclohydrolase I family. Homomer.

It carries out the reaction GTP + H2O = 7,8-dihydroneopterin 3'-triphosphate + formate + H(+). Its pathway is cofactor biosynthesis; 7,8-dihydroneopterin triphosphate biosynthesis; 7,8-dihydroneopterin triphosphate from GTP: step 1/1. The sequence is that of GTP cyclohydrolase 1 from Saccharolobus islandicus (strain L.S.2.15 / Lassen #1) (Sulfolobus islandicus).